A 252-amino-acid polypeptide reads, in one-letter code: Homeobox protein EMX2 (252 aa).

Residues 154–213 (PKRIRTAFSPSQLLRLEHAFEKNHYVVGAERKQLAHSLSLTETQVKVWFQNRRTKFKRQK) constitute a DNA-binding region (homeobox). The tract at residues 212–252 (QKLEEEGSDSQQKKKGTHHINRWRIATKQASPEEIDVTSDD) is disordered. The span at 224–233 (KKKGTHHINR) shows a compositional bias: basic residues.

The protein belongs to the EMX homeobox family. As to quaternary structure, interacts with translation initiation factor EIF4E. Cerebral cortex.

The protein resides in the nucleus. Its subcellular location is the cell projection. It localises to the axon. Transcription factor, which in cooperation with EMX1, acts to generate the boundary between the roof and archipallium in the developing brain. May function in combination with OTX1/2 to specify cell fates in the developing central nervous system. In the inner ear, it controls the distribution of GPR156 at hair cell boundaries, and regulates the organization of stereociliary bundles in opposite orientations across the line of polarity reversal (LPR). This is Homeobox protein EMX2 (EMX2) from Homo sapiens (Human).